A 205-amino-acid chain; its full sequence is MSKRESAKYKIDRRMGENIWGRPKSPVNRREYGPGQHGQRRKGKMSDFGTQLRAKQKLKGYYGELREKQFRATFDEANRRKGDTSENLISLLESRLDAIVYRAKFVPTVFASRQFINHGHVTVNGVRVNIGSYRCKAGDVIEVRQKSKQLVTVLEAVQLAERDVPDYIEVDHNKMVATYARVPSLSDVPYPVVMEPHLVVEFYSR.

Residues 14–49 (RMGENIWGRPKSPVNRREYGPGQHGQRRKGKMSDFG) are disordered. An S4 RNA-binding domain is found at 94–157 (SRLDAIVYRA…KQLVTVLEAV (64 aa)).

The protein belongs to the universal ribosomal protein uS4 family. Part of the 30S ribosomal subunit. Contacts protein S5. The interaction surface between S4 and S5 is involved in control of translational fidelity.

One of the primary rRNA binding proteins, it binds directly to 16S rRNA where it nucleates assembly of the body of the 30S subunit. Its function is as follows. With S5 and S12 plays an important role in translational accuracy. In Agrobacterium fabrum (strain C58 / ATCC 33970) (Agrobacterium tumefaciens (strain C58)), this protein is Small ribosomal subunit protein uS4.